Here is an 89-residue protein sequence, read N- to C-terminus: Small ribosomal subunit protein uS17 (89 aa).

Belongs to the universal ribosomal protein uS17 family. Part of the 30S ribosomal subunit.

In terms of biological role, one of the primary rRNA binding proteins, it binds specifically to the 5'-end of 16S ribosomal RNA. The sequence is that of Small ribosomal subunit protein uS17 from Stenotrophomonas maltophilia (strain K279a).